The primary structure comprises 479 residues: Sodium-coupled neutral amino acid transporter 5 (479 aa).

At 1-61 (MAISCAVGME…LDFEGKTSFG (61 aa)) the chain is on the cytoplasmic side. A helical membrane pass occupies residues 62-84 (MSVFNLSNAIMGSGILGLAYAMA). Residues 85-97 (HTGVIFFLALLLC) lie on the Extracellular side of the membrane. A helical membrane pass occupies residues 98 to 118 (IALLSSYSIHLLLTCASVVGI). Residues 119–135 (RAYEQLGQRAFGPAGKV) lie on the Cytoplasmic side of the membrane. Residues 136–156 (VVAIIICLHNVGAMSSYLFII) traverse the membrane as a helical segment. The Extracellular segment spans residues 157 to 176 (KSELPLVIGTFLHMDPEGDW). Residues 177–197 (FLKGNLLIILVSLLIILPLAL) traverse the membrane as a helical segment. Residues 198-202 (MKHLG) lie on the Cytoplasmic side of the membrane. A helical transmembrane segment spans residues 203-223 (YLGYTSSLSLTCMLFFLISVI). At 224 to 264 (YKKFQIGCDVSHNDTVVEAEQAPLQAFNSSCEAELFTVDSQ) the chain is on the extracellular side. Cys-231 and Cys-254 form a disulfide bridge. Asn-236 is a glycosylation site (N-linked (GlcNAc...) asparagine). The helical transmembrane segment at 265–285 (MSYTVPIMAFAFVCHPEVLPI) threads the bilayer. The Cytoplasmic segment spans residues 286-302 (YTELCRPTQRRMQAVAN). A helical membrane pass occupies residues 303–323 (MSIGAMFIMYGLTATFGYLTF). Residues 324–341 (YSTVKAEMLEMYTQEDML) lie on the Extracellular side of the membrane. The chain crosses the membrane as a helical span at residues 342–362 (ILCVRLAVLLAVTLTVPVVLF). Residues 363-383 (PIRRALQQLLFPSKAFSWLRH) are Cytoplasmic-facing. Residues 384–404 (VAIALILLILVNILVICVPTI) form a helical membrane-spanning segment. Residues 405 to 406 (RD) are Extracellular-facing. Residues 407–427 (IFGFIGSTSAPSLIFILPSVF) form a helical membrane-spanning segment. Topologically, residues 428–446 (YLRIVPTEVEPLFSWPKIQ) are cytoplasmic. A helical transmembrane segment spans residues 447 to 467 (ALCFGVLGVLFMAISLGFMFA). At 468-479 (NWATGQSRMSGH) the chain is on the extracellular side.

Belongs to the amino acid/polyamine transporter 2 family. As to expression, expressed in the ganglion cell layer and the nerve fiber layer (at protein level). Also expreseed in the cells of the inner nuclear layer and in the inner plexiform layer (at protein level). Expressed in Mueller and ganglion retinal cell.

Its subcellular location is the cell membrane. The catalysed reaction is L-glutamine(out) + Na(+)(out) + H(+)(in) = L-glutamine(in) + Na(+)(in) + H(+)(out). The enzyme catalyses L-serine(out) + Na(+)(out) + H(+)(in) = L-serine(in) + Na(+)(in) + H(+)(out). It carries out the reaction L-alanine(out) + Na(+)(out) + H(+)(in) = L-alanine(in) + Na(+)(in) + H(+)(out). It catalyses the reaction glycine(out) + Na(+)(out) + H(+)(in) = glycine(in) + Na(+)(in) + H(+)(out). The catalysed reaction is L-asparagine(out) + Na(+)(out) + H(+)(in) = L-asparagine(in) + Na(+)(in) + H(+)(out). The enzyme catalyses L-histidine(out) + Na(+)(out) + H(+)(in) = L-histidine(in) + Na(+)(in) + H(+)(out). It carries out the reaction L-cysteine(out) + Na(+)(out) + H(+)(in) = L-cysteine(in) + Na(+)(in) + H(+)(out). Its activity is regulated as follows. Not inhibited by lithium. Partial allosteric regulation on ions sodium binding. Functionally, symporter that cotransports neutral amino acids and sodium ions, coupled to an H(+) antiporter activity. Releases L-glutamine and glycine from astroglial cells and may participate in the glutamate/GABA-L-glutamine cycle and the NMDA receptors activation. In addition, contributes significantly to L-glutamine uptake in retina, namely in ganglion and Mueller cells therefore, participates in the retinal glutamate-glutamine cycle. The transport activity is pH sensitive, Li(+) tolerant, bidirectional and associated with large uncoupled fluxes of protons. Moreover functions in both direction and is associated with large uncoupled fluxes of protons. The transport is electroneutral coupled to the cotransport of 1 Na(+) and the antiport of 1 H(+). May have a particular importance for modulation of net hepatic glutamine flux. In Mus musculus (Mouse), this protein is Sodium-coupled neutral amino acid transporter 5.